The chain runs to 862 residues: Protein translocase subunit SecA (862 aa).

ATP is bound by residues Q88, G106–T110, and D506. C839, C841, C850, and H851 together coordinate Zn(2+).

This sequence belongs to the SecA family. As to quaternary structure, monomer and homodimer. Part of the essential Sec protein translocation apparatus which comprises SecA, SecYEG and auxiliary proteins SecDF-YajC and YidC. Zn(2+) serves as cofactor.

It localises to the cell inner membrane. The protein localises to the cytoplasm. It catalyses the reaction ATP + H2O + cellular proteinSide 1 = ADP + phosphate + cellular proteinSide 2.. Part of the Sec protein translocase complex. Interacts with the SecYEG preprotein conducting channel. Has a central role in coupling the hydrolysis of ATP to the transfer of proteins into and across the cell membrane, serving as an ATP-driven molecular motor driving the stepwise translocation of polypeptide chains across the membrane. In Campylobacter jejuni subsp. jejuni serotype O:2 (strain ATCC 700819 / NCTC 11168), this protein is Protein translocase subunit SecA.